We begin with the raw amino-acid sequence, 526 residues long: Cytochrome P450 monooxygenase milC (526 aa).

A helical transmembrane segment spans residues 2 to 20 (AIHAAYIFIAATLIALYVA). Cys-470 contacts heme.

This sequence belongs to the cytochrome P450 family. The cofactor is heme.

It is found in the membrane. It catalyses the reaction cordypyrone A + reduced [NADPH--hemoprotein reductase] + O2 = cordypyrone B + oxidized [NADPH--hemoprotein reductase] + H2O + H(+). It participates in secondary metabolite biosynthesis. Its function is as follows. Cytochrome P450 monooxygenase; part of the gene cluster that mediates the biosynthesis of cordypyrones A and B, 2 pyrones that show modest activities against pathogenic bacteria including methicillin-resistant Staphylococcus aureus (MRSA), Mycobacterium tuberculosis and Bacillus cereus. The HR-PKS milA catalyzes the formation of cordypyrones A via condensation of one acetate with 10 malonate units. Since milA lacks an enoyl reductase domain, the 2 beta-keto processing domains DH and KR of milA collaborate with the trans-enoyl reductase milB to catalyze the different levels of reduction. The cytochrome P450 monooxygenase milC then hydroxylates the C-22 of cordypyrones A to yield cordypyrones B. This is Cytochrome P450 monooxygenase milC from Cordyceps militaris (strain CM01) (Caterpillar fungus).